Here is a 433-residue protein sequence, read N- to C-terminus: Serine/threonine-protein kinase STK11 (433 aa).

Ser31 bears the Phosphoserine mark. N6-acetyllysine occurs at positions 44 and 48. The sufficient for interaction with SIRT1 stretch occupies residues 45 to 90 (LIGKYLMGDLLGEGSYGKVKEVLDSETLCRRAVKILKKKKLRRIPN). In terms of domain architecture, Protein kinase spans 49–309 (YLMGDLLGEG…IRQIRQHSWF (261 aa)). ATP-binding positions include 55-63 (LGEGSYGKV) and Lys78. N6-acetyllysine occurs at positions 96 and 97. Asp176 serves as the catalytic Proton acceptor. Thr189 carries the post-translational modification Phosphothreonine; by autocatalysis. 2 positions are modified to N6-acetyllysine: Lys296 and Lys311. The disordered stretch occupies residues 312-331 (KHPPAEAPVPIPPSPDTKDR). A compositionally biased stretch (pro residues) spans 316–326 (AEAPVPIPPSP). Ser325 carries the post-translational modification Phosphoserine. The residue at position 336 (Thr336) is a Phosphothreonine; by autocatalysis. Thr363 is subject to Phosphothreonine; by ATM and autocatalysis. Residues 397–433 (AAQLSTKSRAEGRAPNPARKACSASSKIRRLSACKQQ) form a disordered region. Phosphoserine is present on residues Gln399 and Ser401. N6-acetyllysine is present on Lys416. Cys418 carries the S-palmitoyl cysteine lipid modification. N6-acetyllysine is present on Lys423. The segment covering 423-433 (KIRRLSACKQQ) has biased composition (basic residues). Ser428 carries the post-translational modification Phosphoserine; by autocatalysis, PKA, PKC/PRKCZ and RPS6KA1. Cys430 is modified (cysteine methyl ester). Cys430 carries the S-farnesyl cysteine lipid modification. Lys431 carries the N6-acetyllysine modification. The propeptide at 431–433 (KQQ) is removed in mature form.

This sequence belongs to the protein kinase superfamily. CAMK Ser/Thr protein kinase family. LKB1 subfamily. In terms of assembly, catalytic component of a trimeric complex composed of STK11/LKB1, STRAD (STRADA or STRADB) and CAB39/MO25 (CAB39/MO25alpha or CAB39L/MO25beta): the complex tethers STK11/LKB1 in the cytoplasm and stimulates its catalytic activity. Found in a ternary complex composed of SMAD4, STK11/LKB1 and STK11IP. Interacts with p53/TP53, SMAD4, STK11IP and WDR6. Interacts with NR4A1. Interacts with NISCH; this interaction may increase STK11 activity. Interacts with PTEN; leading to PTEN phosphorylation. Interacts with SIRT1; the interaction deacetylates STK11. Interacts with CDKN1A. Mg(2+) serves as cofactor. It depends on Mn(2+) as a cofactor. Post-translationally, phosphorylated by ATM at Thr-363 following ionizing radiation (IR). Phosphorylation at Ser-428 by RPS6KA1 and/or some PKA is required to inhibit cell growth. Phosphorylation at Ser-428 is also required during neuronal polarization to mediate phosphorylation of BRSK1 and BRSK2. Phosphorylation by PKC/PRKCZ at Ser-399 in isoform 2 promotes metformin (or peroxynitrite)-induced nuclear export of STK11 and activation of AMPK. UV radiation-induced phosphorylation at Thr-363 mediates CDKN1A degradation. In terms of processing, acetylated. Deacetylation at Lys-48 enhances cytoplasmic localization and kinase activity in vitro. As to expression, ubiquitously expressed. Strongest expression in testis and fetal liver.

It is found in the nucleus. The protein resides in the cytoplasm. The protein localises to the membrane. It localises to the mitochondrion. The catalysed reaction is L-seryl-[protein] + ATP = O-phospho-L-seryl-[protein] + ADP + H(+). It carries out the reaction L-threonyl-[protein] + ATP = O-phospho-L-threonyl-[protein] + ADP + H(+). Activated by forming a complex with STRAD (STRADA or STRADB) and CAB39/MO25 (CAB39/MO25alpha or CAB39L/MO25beta): STRADA (or STRADB)-binding promotes a conformational change of STK11/LKB1 in an active conformation, which is stabilized by CAB39/MO25alpha (or CAB39L/MO25beta) interacting with the STK11/LKB1 activation loop. Sequestration in the nucleus by NR4A1 prevents it from phosphorylating and activating cytoplasmic AMPK. Functionally, tumor suppressor serine/threonine-protein kinase that controls the activity of AMP-activated protein kinase (AMPK) family members, thereby playing a role in various processes such as cell metabolism, cell polarity, apoptosis and DNA damage response. Acts by phosphorylating the T-loop of AMPK family proteins, thus promoting their activity: phosphorylates PRKAA1, PRKAA2, BRSK1, BRSK2, MARK1, MARK2, MARK3, MARK4, NUAK1, NUAK2, SIK1, SIK2, SIK3 and SNRK but not MELK. Also phosphorylates non-AMPK family proteins such as STRADA, PTEN and possibly p53/TP53. Acts as a key upstream regulator of AMPK by mediating phosphorylation and activation of AMPK catalytic subunits PRKAA1 and PRKAA2 and thereby regulates processes including: inhibition of signaling pathways that promote cell growth and proliferation when energy levels are low, glucose homeostasis in liver, activation of autophagy when cells undergo nutrient deprivation, and B-cell differentiation in the germinal center in response to DNA damage. Also acts as a regulator of cellular polarity by remodeling the actin cytoskeleton. Required for cortical neuron polarization by mediating phosphorylation and activation of BRSK1 and BRSK2, leading to axon initiation and specification. Involved in DNA damage response: interacts with p53/TP53 and recruited to the CDKN1A/WAF1 promoter to participate in transcription activation. Able to phosphorylate p53/TP53; the relevance of such result in vivo is however unclear and phosphorylation may be indirect and mediated by downstream STK11/LKB1 kinase NUAK1. Also acts as a mediator of p53/TP53-dependent apoptosis via interaction with p53/TP53: translocates to the mitochondrion during apoptosis and regulates p53/TP53-dependent apoptosis pathways. Regulates UV radiation-induced DNA damage response mediated by CDKN1A. In association with NUAK1, phosphorylates CDKN1A in response to UV radiation and contributes to its degradation which is necessary for optimal DNA repair. Has a role in spermiogenesis. This Homo sapiens (Human) protein is Serine/threonine-protein kinase STK11.